We begin with the raw amino-acid sequence, 115 residues long: NADH-ubiquinone oxidoreductase chain 3 (115 aa).

3 consecutive transmembrane segments (helical) span residues 4–24, 55–75, and 86–106; these read LMAL…AFWL, FFLV…LLPL, and TMML…AYEW.

Belongs to the complex I subunit 3 family. In terms of assembly, core subunit of respiratory chain NADH dehydrogenase (Complex I) which is composed of 45 different subunits. Interacts with TMEM186. Interacts with TMEM242.

It is found in the mitochondrion inner membrane. It catalyses the reaction a ubiquinone + NADH + 5 H(+)(in) = a ubiquinol + NAD(+) + 4 H(+)(out). Core subunit of the mitochondrial membrane respiratory chain NADH dehydrogenase (Complex I) which catalyzes electron transfer from NADH through the respiratory chain, using ubiquinone as an electron acceptor. Essential for the catalytic activity of complex I. This is NADH-ubiquinone oxidoreductase chain 3 from Peromyscus gossypinus (Cotton deermouse).